A 104-amino-acid chain; its full sequence is N(4)-acetylcytidine amidohydrolase (104 aa).

Residues 6–102 (TFYTRFQQDI…ELYVIAFKKV (97 aa)) form the ASCH domain. Lys-20 (proton acceptor) is an active-site residue. Thr-23 acts as the Nucleophile in catalysis. The active-site Proton donor is Glu-73.

Belongs to the N(4)-acetylcytidine amidohydrolase family.

It catalyses the reaction N(4)-acetylcytidine + H2O = cytidine + acetate + H(+). The catalysed reaction is N(4)-acetyl-2'-deoxycytidine + H2O = 2'-deoxycytidine + acetate + H(+). The enzyme catalyses N(4)-acetylcytosine + H2O = cytosine + acetate + H(+). Its function is as follows. Catalyzes the hydrolysis of N(4)-acetylcytidine (ac4C). This Cronobacter sakazakii (strain ATCC BAA-894) (Enterobacter sakazakii) protein is N(4)-acetylcytidine amidohydrolase.